Consider the following 145-residue polypeptide: Methyl-coenzyme M reductase I operon protein D (145 aa).

In terms of assembly, MCR is composed of three subunits: alpha, beta, and gamma. The function of proteins C and D is not known.

In Methanothermobacter thermautotrophicus (strain ATCC 29096 / DSM 1053 / JCM 10044 / NBRC 100330 / Delta H) (Methanobacterium thermoautotrophicum), this protein is Methyl-coenzyme M reductase I operon protein D (mcrD).